The sequence spans 190 residues: MNPQIRNPMKAMYPGTFYFQFKNLWEANDRNETWLCFTVEGIKRRSVVSWKTGVFRNQVDSETHCHAERCFLSWFCDDILSPNTKYQVTWYTSWSPCPDCAGEVAEFLARHSNVNLTIFTARLYYFQYPCYQEGLRSLSQEGVAVEIMDYEDFKYCWENFVYNDNEPFKPWKGLKTNFRLLKRRLRESLQ.

Residues 29-138 (DRNETWLCFT…PCYQEGLRSL (110 aa)) form the CMP/dCMP-type deaminase domain. The interval 40 to 86 (EGIKRRSVVSWKTGVFRNQVDSETHCHAERCFLSWFCDDILSPNTKY) is (Microbial infection) Required for interaction with human foamy virus protein Bet. Residue His66 participates in Zn(2+) binding. Glu68 functions as the Proton donor in the catalytic mechanism. Residues Cys97 and Cys100 each coordinate Zn(2+).

It belongs to the cytidine and deoxycytidylate deaminase family. In terms of assembly, homodimer. Interacts with TRIB3. Interacts with AGO2. (Microbial infection) Interacts with human foamy virus protein Bet; this interaction does not induce APOBEC3C degradation but prevents its dimerization and incorporation into the virion by binding of Bet close to or within the APOBEC3C dimerization site. As to quaternary structure, (Microbial infection) Interacts with HIV-1 Vif. The cofactor is Zn(2+). Expressed in spleen, testes, peripherical blood lymphocytes, heart, thymus, prostate and ovary.

It localises to the nucleus. Its subcellular location is the cytoplasm. It carries out the reaction a 2'-deoxycytidine in single-stranded DNA + H2O + H(+) = a 2'-deoxyuridine in single-stranded DNA + NH4(+). (Microbial infection) Antiviral activity is neutralized by the HIV-1 virion infectivity factor (Vif), that prevents its incorporation into progeny HIV-1 virions by both inhibiting its translation and/or by inducing its ubiquitination and subsequent degradation by the 26S proteasome. In terms of biological role, DNA deaminase (cytidine deaminase) which acts as an inhibitor of retrovirus replication and retrotransposon mobility via deaminase-dependent and -independent mechanisms. After the penetration of retroviral nucleocapsids into target cells of infection and the initiation of reverse transcription, it can induce the conversion of cytosine to uracil in the minus-sense single-strand viral DNA, leading to G-to-A hypermutations in the subsequent plus-strand viral DNA. The resultant detrimental levels of mutations in the proviral genome, along with a deamination-independent mechanism that works prior to the proviral integration, together exert efficient antiretroviral effects in infected target cells. Selectively targets single-stranded DNA and does not deaminate double-stranded DNA or single- or double-stranded RNA. Exhibits antiviral activity against simian immunodeficiency virus (SIV), hepatitis B virus (HBV), herpes simplex virus 1 (HHV-1) and Epstein-Barr virus (EBV) and may inhibit the mobility of LTR and non-LTR retrotransposons. May also play a role in the epigenetic regulation of gene expression through the process of active DNA demethylation. The chain is DNA dC-&gt;dU-editing enzyme APOBEC-3C (APOBEC3C) from Homo sapiens (Human).